Consider the following 561-residue polypeptide: Urocanate hydratase (561 aa).

Residues 52 to 53 (GG), glutamine 130, 176 to 178 (GMG), glutamate 196, arginine 201, 242 to 243 (NA), 267 to 271 (QTSAH), 277 to 278 (YL), and tyrosine 326 each bind NAD(+). The active site involves cysteine 414. Glycine 496 contributes to the NAD(+) binding site.

Belongs to the urocanase family. The cofactor is NAD(+).

The protein localises to the cytoplasm. It catalyses the reaction 4-imidazolone-5-propanoate = trans-urocanate + H2O. It participates in amino-acid degradation; L-histidine degradation into L-glutamate; N-formimidoyl-L-glutamate from L-histidine: step 2/3. Catalyzes the conversion of urocanate to 4-imidazolone-5-propionate. In Rhizobium rhizogenes (strain K84 / ATCC BAA-868) (Agrobacterium radiobacter), this protein is Urocanate hydratase.